The following is a 272-amino-acid chain: MTAHASIATPGGISLATGRDVRLASRSGALTGSTAGFAPGFVQANLAILPAKLAFDFLRFCQRNPKPCPVIGVSEPGDPTLSSIGLDLDIRTDVPGYCVYKDGVLVDEPADLKAYWREDLVTFAIGCSLSFEEALMAADIPLRHVEKGVKVPMFRTNIACVPAGPFAGPMVVSMRPMTPANAIRAVQITSRFPSVHGAPIHIGLPEAIGIKDLSKPDYGDAVEILEGEIPVFWACGVTPQSVISAAKIEYALAHGPGMMLCTDLKNSALATG.

Belongs to the D-glutamate cyclase family.

The polypeptide is Putative hydro-lyase AZC_4080 (Azorhizobium caulinodans (strain ATCC 43989 / DSM 5975 / JCM 20966 / LMG 6465 / NBRC 14845 / NCIMB 13405 / ORS 571)).